The chain runs to 834 residues: Mannosyl-oligosaccharide glucosidase (834 aa).

A compositionally biased stretch (basic residues) spans 1-10 (MARGERRRRA). At 1–36 (MARGERRRRAAAAEGARPLERARGAGRRDGRAGGAR) the chain is on the cytoplasmic side. The interval 1–37 (MARGERRRRAAAAEGARPLERARGAGRRDGRAGGARG) is disordered. An Endoplasmic reticulum targeting motif is present at residues 3–9 (RGERRRR). The span at 17-31 (RPLERARGAGRRDGR) shows a compositional bias: basic and acidic residues. A helical; Signal-anchor for type II membrane protein membrane pass occupies residues 37–57 (GSAGGAALAVVVLALAFGLSG). The Lumenal segment spans residues 58–834 (RWVLAWLGVR…LVLLIMAEEY (777 aa)). The tract at residues 74-136 (PAPSALPPDS…GTPPKLRHTC (63 aa)) is required for endoplasmic reticulum targeting. The active-site Proton donor is the Asp-580. Asn-654 is a glycosylation site (N-linked (GlcNAc...) asparagine). The Proton acceptor role is filled by Glu-804.

The protein belongs to the glycosyl hydrolase 63 family.

The protein resides in the endoplasmic reticulum membrane. The catalysed reaction is N(4)-(alpha-D-Glc-(1-&gt;2)-alpha-D-Glc-(1-&gt;3)-alpha-D-Glc-(1-&gt;3)-alpha-D-Man-(1-&gt;2)-alpha-D-Man-(1-&gt;2)-alpha-D-Man-(1-&gt;3)-[alpha-D-Man-(1-&gt;2)-alpha-D-Man-(1-&gt;3)-[alpha-D-Man-(1-&gt;2)-alpha-D-Man-(1-&gt;6)]-alpha-D-Man-(1-&gt;6)]-beta-D-Man-(1-&gt;4)-beta-D-GlcNAc-(1-&gt;4)-beta-D-GlcNAc)-L-asparaginyl-[protein] + H2O = N(4)-(alpha-D-Glc-(1-&gt;3)-alpha-D-Glc-(1-&gt;3)-alpha-D-Man-(1-&gt;2)-alpha-D-Man-(1-&gt;2)-alpha-D-Man-(1-&gt;3)-[alpha-D-Man-(1-&gt;2)-alpha-D-Man-(1-&gt;3)-[alpha-D-Man-(1-&gt;2)-alpha-D-Man-(1-&gt;6)]-alpha-D-Man-(1-&gt;6)]-beta-D-Man-(1-&gt;4)-beta-D-GlcNAc-(1-&gt;4)-beta-D-GlcNAc)-L-asparaginyl-[protein] + beta-D-glucose. Its pathway is glycan metabolism; N-glycan degradation. In the context of N-glycan degradation, cleaves the distal alpha 1,2-linked glucose residue from the Glc(3)Man(9)GlcNAc(2) oligosaccharide precursor in a highly specific manner. The sequence is that of Mannosyl-oligosaccharide glucosidase from Rattus norvegicus (Rat).